A 236-amino-acid polypeptide reads, in one-letter code: Uridylate kinase (236 aa).

Residue 10–13 (KLSG) participates in ATP binding. Gly52 is a UMP binding site. 2 residues coordinate ATP: Gly53 and Arg57. UMP is bound by residues Asp72 and 133 to 140 (TGNPFFTT). Residues Thr160, Tyr166, and Asp169 each contribute to the ATP site.

This sequence belongs to the UMP kinase family. In terms of assembly, homohexamer.

Its subcellular location is the cytoplasm. It carries out the reaction UMP + ATP = UDP + ADP. Its pathway is pyrimidine metabolism; CTP biosynthesis via de novo pathway; UDP from UMP (UMPK route): step 1/1. With respect to regulation, inhibited by UTP. Functionally, catalyzes the reversible phosphorylation of UMP to UDP. The chain is Uridylate kinase from Cupriavidus metallidurans (strain ATCC 43123 / DSM 2839 / NBRC 102507 / CH34) (Ralstonia metallidurans).